We begin with the raw amino-acid sequence, 144 residues long: Monobin (144 aa).

The N-terminal stretch at Met-1 to Ala-16 is a signal peptide. Position 17 is a pyrrolidone carboxylic acid (Gln-17). The BPTI/Kunitz inhibitor 1 domain occupies Arg-18 to Gln-73. Cystine bridges form between Cys-22/Cys-70, Cys-31/Cys-53, and Cys-47/Cys-66. The linker stretch occupies residues Gly-74 to Gly-85. The BPTI/Kunitz inhibitor domain maps to Cys-86–Cys-139. Cystine bridges form between Cys-86–Cys-139, Cys-95–Cys-120, and Cys-112–Cys-135. A Cell attachment site motif is present at residues Arg-92–Asp-94.

Post-translationally, the N-terminus is blocked. As to expression, expressed in salivary glands.

It localises to the cytoplasmic vesicle. The protein resides in the secretory vesicle. The protein localises to the secreted. Functionally, tick salivary thrombin inhibitor that plays an important part in the anti-hemostatic strategy of ticks. The protein is Monobin of Argas monolakensis (Mono lake bird tick).